The following is a 396-amino-acid chain: Tryptophan synthase beta chain (396 aa).

At K88 the chain carries N6-(pyridoxal phosphate)lysine.

This sequence belongs to the TrpB family. In terms of assembly, tetramer of two alpha and two beta chains. Pyridoxal 5'-phosphate is required as a cofactor.

It catalyses the reaction (1S,2R)-1-C-(indol-3-yl)glycerol 3-phosphate + L-serine = D-glyceraldehyde 3-phosphate + L-tryptophan + H2O. Its pathway is amino-acid biosynthesis; L-tryptophan biosynthesis; L-tryptophan from chorismate: step 5/5. In terms of biological role, the beta subunit is responsible for the synthesis of L-tryptophan from indole and L-serine. This chain is Tryptophan synthase beta chain, found in Shewanella baltica (strain OS185).